A 235-amino-acid polypeptide reads, in one-letter code: Small ribosomal subunit protein eS4 (235 aa).

The S4 RNA-binding domain occupies 38 to 99; that stretch reads VTLLTIIRDY…GESYRVVYNN (62 aa).

This sequence belongs to the eukaryotic ribosomal protein eS4 family.

The sequence is that of Small ribosomal subunit protein eS4 (rps4e) from Thermoplasma volcanium (strain ATCC 51530 / DSM 4299 / JCM 9571 / NBRC 15438 / GSS1).